Here is a 226-residue protein sequence, read N- to C-terminus: PKHD-type hydroxylase Pput_0892 (226 aa).

Residues 78-178 (KVFPPLINCY…RYAAFFWTQS (101 aa)) form the Fe2OG dioxygenase domain. 3 residues coordinate Fe cation: histidine 96, aspartate 98, and histidine 159. A 2-oxoglutarate-binding site is contributed by arginine 169.

Fe(2+) is required as a cofactor. The cofactor is L-ascorbate.

In Pseudomonas putida (strain ATCC 700007 / DSM 6899 / JCM 31910 / BCRC 17059 / LMG 24140 / F1), this protein is PKHD-type hydroxylase Pput_0892.